Here is a 945-residue protein sequence, read N- to C-terminus: Microtubule cross-linking factor 3 (945 aa).

Composition is skewed to low complexity over residues 1–23 (MSQP…AAAT), 72–93 (QQQL…TSGT), and 110–126 (PKGA…GAEG). The first 25 residues, 1 to 25 (MSQPPSGGAAPAATSASAAAAATEA), serve as a signal peptide directing secretion. Disordered stretches follow at residues 1 to 250 (MSQP…SYWK), 265 to 293 (KERA…PVAG), 307 to 366 (SPMA…TLKN), and 494 to 522 (LSLK…DNED). A compositionally biased stretch (basic and acidic residues) spans 141–151 (GQPEEAPREIE). The span at 164-179 (GGVGGGGEGGGAGGGP) shows a compositional bias: gly residues. Over residues 219–235 (TAATSKTPGPGSRNSGS) the composition is skewed to low complexity. A compositionally biased stretch (gly residues) spans 236-247 (GSTGSGSGGGGS). Over residues 328-345 (AMQAAAPPSSQPHSQQLQ) the composition is skewed to low complexity. Residues 340–724 (HSQQLQEQED…GKVMQLQYEN (385 aa)) are a coiled coil. 2 stretches are compositionally biased toward basic and acidic residues: residues 353-366 (EMEK…TLKN) and 494-511 (LSLK…EKKA). A Phosphoserine modification is found at serine 567. The interval 741–811 (GIRGSPRDSD…PWPKSFSDRQ (71 aa)) is disordered. Over residues 745–766 (SPRDSDAESDAGKKESDDDSRP) the composition is skewed to basic and acidic residues. Serine 779 is subject to Phosphoserine. A coiled-coil region spans residues 809–833 (DRQQMKDIRSEAERLGKTIDRLIAD). Residues 913 to 933 (PIILLILILVLFSSLSYTTIF) form a helical membrane-spanning segment.

This sequence belongs to the MTCL family.

The protein localises to the membrane. In Mus musculus (Mouse), this protein is Microtubule cross-linking factor 3 (Mtcl3).